A 1175-amino-acid polypeptide reads, in one-letter code: 1-phosphatidylinositol 4,5-bisphosphate phosphodiesterase beta-4 (1175 aa).

A2 bears the N-acetylalanine mark. The PI-PLC X-box domain occupies 313–463; the sequence is QEMDHPLAHY…LKRKILIKNK (151 aa). Active-site residues include H328 and H375. The disordered stretch occupies residues 487-512; that stretch reads AAPASILEDDNEEEIESADQEEEAHP. The span at 493 to 508 shows a compositional bias: acidic residues; it reads LEDDNEEEIESADQEE. The PI-PLC Y-box domain maps to 565 to 681; it reads LSTMINYAQP…GYLLKPDFMR (117 aa). Residues 684-809 enclose the C2 domain; it reads DRTFDPFSET…SLRNEGNKPL (126 aa). Disordered regions lie at residues 860–904 and 1082–1110; these read SDIA…LGSG and KISM…VREL. Polar residues-rich tracts occupy residues 885-900 and 1085-1094; these read VTPQ…TTAA and MENSKAISQD. T886 is subject to Phosphothreonine. A compositionally biased stretch (basic and acidic residues) spans 1095–1109; the sequence is KSIKNKAERERRVRE.

Ca(2+) is required as a cofactor. In terms of tissue distribution, preferentially expressed in the retina.

Its subcellular location is the cell membrane. It catalyses the reaction a 1,2-diacyl-sn-glycero-3-phospho-(1D-myo-inositol-4,5-bisphosphate) + H2O = 1D-myo-inositol 1,4,5-trisphosphate + a 1,2-diacyl-sn-glycerol + H(+). The enzyme catalyses a 1,2-diacyl-sn-glycero-3-phospho-(1D-myo-inositol) + H2O = 1D-myo-inositol 1-phosphate + a 1,2-diacyl-sn-glycerol + H(+). Activated phosphatidylinositol-specific phospholipase C enzymes catalyze the production of the second messenger molecules diacylglycerol (DAG) and inositol 1,4,5-trisphosphate (IP3) involved in G-protein coupled receptor signaling pathways. PLCB4 is a direct effector of the endothelin receptor signaling pathway that plays an essential role in lower jaw and middle ear structures development. This Rattus norvegicus (Rat) protein is 1-phosphatidylinositol 4,5-bisphosphate phosphodiesterase beta-4.